The following is a 754-amino-acid chain: Nitrate reductase (754 aa).

The segment at residues 1-31 (MKFTRRSFVKASALATAMVAAGCSPQPVAPK) is a signal peptide (tat-type signal). A 4Fe-4S Mo/W bis-MGD-type domain is found at 39–95 (ATWYKTVCRYCGVGCGVMVAAKDNRVVAVKGDTENPVNKGLLCVKGYYLDRIMNTEE). Residues Cys46, Cys49, Cys53, and Cys81 each coordinate [4Fe-4S] cluster. Mo-bis(molybdopterin guanine dinucleotide) contacts are provided by residues Lys83, Gln144, Asn169, Cys173, 256 to 258 (GTD), Met341, Gln345, Asn451, Lys497, Asp524, 642 to 651 (TGRILEHWHT), Asn728, and Lys745.

The protein belongs to the prokaryotic molybdopterin-containing oxidoreductase family. NasA/NapA/NarB subfamily. Component of the nitrate reductase NapAB complex composed of NapA and NapB. [4Fe-4S] cluster serves as cofactor. The cofactor is Mo-bis(molybdopterin guanine dinucleotide). Post-translationally, predicted to be exported by the Tat system. The position of the signal peptide cleavage has not been experimentally proven.

It localises to the secreted. The catalysed reaction is 2 Fe(II)-[cytochrome] + nitrate + 2 H(+) = 2 Fe(III)-[cytochrome] + nitrite + H2O. Catalytic subunit of the nitrate reductase complex NapAB. Receives electrons from NapB and catalyzes the reduction of nitrate to nitrite. The protein is Nitrate reductase of Symbiobacterium thermophilum (strain DSM 24528 / JCM 14929 / IAM 14863 / T).